The following is a 727-amino-acid chain: Platelet endothelial cell adhesion molecule (727 aa).

An N-terminal signal peptide occupies residues 1–17; that stretch reads MLLALGLTLVLYASLQA. The Extracellular segment spans residues 18 to 590; the sequence is EENSFTINSI…VRVFLAPWKK (573 aa). 6 consecutive Ig-like C2-type domains span residues 40–126, 135–213, 225–309, 315–391, 413–472, and 488–578; these read GQQL…PKVT, GGVV…PIRS, PKFE…IMVN, PKPK…LVPI, GHAI…NCHS, and PVDE…RSST. Cys47 and Cys99 are disulfide-bonded. Asn74 and Asn141 each carry an N-linked (GlcNAc...) asparagine glycan. Intrachain disulfides connect Cys142–Cys195 and Cys245–Cys293. N-linked (GlcNAc...) asparagine glycans are attached at residues Asn309, Asn345, Asn360, Asn424, and Asn540. 3 disulfide bridges follow: Cys336–Cys375, Cys420–Cys465, and Cys512–Cys561. The chain crosses the membrane as a helical span at residues 591–609; the sequence is GLIAVVVIGVVIATLIVAA. Topologically, residues 610-727 are cytoplasmic; it reads KCYFLRKAKA…SRTEGSLNGT (118 aa). Cys611 is lipidated: S-palmitoyl cysteine. The disordered stretch occupies residues 642-672; that stretch reads SEPSVEANSHYGYDDVSGNDAVKPINQNKDP. 2 short sequence motifs (ITIM motif) span residues 677–682 and 700–705; these read VEYTEV and TVYSEI. Tyr679 and Tyr702 each carry phosphotyrosine; by FER. A membrane-bound segment which detaches upon phosphorylation region spans residues 698 to 718; the sequence is TETVYSEIRKVDPNLMENRYS. Residues 710-727 form a may play a role in cytoprotective signaling region; it reads PNLMENRYSRTEGSLNGT. Residues Ser718 and Ser723 each carry the phosphoserine modification.

As to quaternary structure, trans-homodimer (via Ig-like C2-type 1 and Ig-like C2-type 2 domains); trans-homodimerization is required for cell-cell interaction. Forms a complex with BDKRB2 and GNAQ. Interacts with BDKRB2 and GNAQ. Interacts with PTPN11; Tyr-702 is critical for PTPN11 recruitment. Interacts with FER. Interacts with CD177; the interaction is Ca(2+)-dependent; the interaction is direct. Phosphorylated on Ser and Tyr residues by src kinases after cellular activation. Upon activation, phosphorylated on Ser-718 which probably initiates the dissociation of the membrane-interaction segment (residues 698-718) from the cell membrane allowing the sequential phosphorylation of Tyr-702 and Tyr-679. Constitutively phosphorylated on Ser-723 in resting platelets. Phosphorylated on tyrosine residues by FER and FES in response to FCER1 activation. In endothelial cells Fyn mediates mechanical-force (stretch or pull) induced tyrosine phosphorylation. Post-translationally, palmitoylation by ZDHHC21 is necessary for cell surface expression in endothelial cells and enrichment in membrane rafts. In terms of tissue distribution, expressed in lung and platelets (at protein level).

It is found in the cell membrane. Its subcellular location is the membrane raft. The protein resides in the cell junction. Cell adhesion molecule which is required for leukocyte transendothelial migration (TEM) under most inflammatory conditions. Tyr-679 plays a critical role in TEM and is required for efficient trafficking of PECAM1 to and from the lateral border recycling compartment (LBRC) and is also essential for the LBRC membrane to be targeted around migrating leukocytes. Trans-homophilic interaction may play a role in endothelial cell-cell adhesion via cell junctions. Heterophilic interaction with CD177 plays a role in transendothelial migration of neutrophils. Homophilic ligation of PECAM1 prevents macrophage-mediated phagocytosis of neighboring viable leukocytes by transmitting a detachment signal. Promotes macrophage-mediated phagocytosis of apoptotic leukocytes by tethering them to the phagocytic cells; PECAM1-mediated detachment signal appears to be disabled in apoptotic leukocytes. Modulates bradykinin receptor BDKRB2 activation. Regulates bradykinin- and hyperosmotic shock-induced ERK1/2 activation in endothelial cells. Induces susceptibility to atherosclerosis. The polypeptide is Platelet endothelial cell adhesion molecule (Pecam1) (Mus musculus (Mouse)).